A 566-amino-acid polypeptide reads, in one-letter code: Arginine--tRNA ligase (566 aa).

Positions 121–131 match the 'HIGH' region motif; sequence ANPNGPFHIGH.

This sequence belongs to the class-I aminoacyl-tRNA synthetase family.

The protein localises to the cytoplasm. It catalyses the reaction tRNA(Arg) + L-arginine + ATP = L-arginyl-tRNA(Arg) + AMP + diphosphate. This chain is Arginine--tRNA ligase, found in Methanococcus maripaludis (strain C6 / ATCC BAA-1332).